Reading from the N-terminus, the 162-residue chain is UPF0178 protein RSKD131_2223 (162 aa).

Belongs to the UPF0178 family.

This Cereibacter sphaeroides (strain KD131 / KCTC 12085) (Rhodobacter sphaeroides) protein is UPF0178 protein RSKD131_2223.